The following is a 695-amino-acid chain: Elongation factor G 1 (695 aa).

One can recognise a tr-type G domain in the interval S6 to T284. GTP-binding positions include A15–T22, D82–H86, and N136–D139.

It belongs to the TRAFAC class translation factor GTPase superfamily. Classic translation factor GTPase family. EF-G/EF-2 subfamily.

Its subcellular location is the cytoplasm. Its function is as follows. Catalyzes the GTP-dependent ribosomal translocation step during translation elongation. During this step, the ribosome changes from the pre-translocational (PRE) to the post-translocational (POST) state as the newly formed A-site-bound peptidyl-tRNA and P-site-bound deacylated tRNA move to the P and E sites, respectively. Catalyzes the coordinated movement of the two tRNA molecules, the mRNA and conformational changes in the ribosome. The protein is Elongation factor G 1 of Desulfotalea psychrophila (strain LSv54 / DSM 12343).